The primary structure comprises 272 residues: Putative pyruvate, phosphate dikinase regulatory protein 2 (272 aa).

154 to 161 is an ADP binding site; the sequence is GVSRTSKT.

The protein belongs to the pyruvate, phosphate/water dikinase regulatory protein family. PDRP subfamily.

The enzyme catalyses N(tele)-phospho-L-histidyl/L-threonyl-[pyruvate, phosphate dikinase] + ADP = N(tele)-phospho-L-histidyl/O-phospho-L-threonyl-[pyruvate, phosphate dikinase] + AMP + H(+). It catalyses the reaction N(tele)-phospho-L-histidyl/O-phospho-L-threonyl-[pyruvate, phosphate dikinase] + phosphate + H(+) = N(tele)-phospho-L-histidyl/L-threonyl-[pyruvate, phosphate dikinase] + diphosphate. Bifunctional serine/threonine kinase and phosphorylase involved in the regulation of the pyruvate, phosphate dikinase (PPDK) by catalyzing its phosphorylation/dephosphorylation. The chain is Putative pyruvate, phosphate dikinase regulatory protein 2 from Staphylococcus epidermidis (strain ATCC 35984 / DSM 28319 / BCRC 17069 / CCUG 31568 / BM 3577 / RP62A).